The chain runs to 360 residues: GTPase Obg (360 aa).

Positions Met1–Ile156 constitute an Obg domain. One can recognise an OBG-type G domain in the interval Ala157–Gln360. GTP is bound by residues Gly163–Ser170, Phe188–Val192, Asp210–Gly213, Asn279–Asp282, and Ser341–Val343. Mg(2+)-binding residues include Ser170 and Thr190.

This sequence belongs to the TRAFAC class OBG-HflX-like GTPase superfamily. OBG GTPase family. In terms of assembly, monomer. Requires Mg(2+) as cofactor.

The protein resides in the cytoplasm. Its function is as follows. An essential GTPase which binds GTP, GDP and possibly (p)ppGpp with moderate affinity, with high nucleotide exchange rates and a fairly low GTP hydrolysis rate. Plays a role in control of the cell cycle, stress response, ribosome biogenesis and in those bacteria that undergo differentiation, in morphogenesis control. This chain is GTPase Obg, found in Helicobacter pylori (strain J99 / ATCC 700824) (Campylobacter pylori J99).